The chain runs to 296 residues: Homoserine kinase (296 aa).

ATP is bound at residue 84 to 94; the sequence is PLARGLGSSSS.

Belongs to the GHMP kinase family. Homoserine kinase subfamily.

The protein resides in the cytoplasm. The enzyme catalyses L-homoserine + ATP = O-phospho-L-homoserine + ADP + H(+). The protein operates within amino-acid biosynthesis; L-threonine biosynthesis; L-threonine from L-aspartate: step 4/5. Catalyzes the ATP-dependent phosphorylation of L-homoserine to L-homoserine phosphate. The sequence is that of Homoserine kinase from Lactococcus lactis subsp. lactis (strain IL1403) (Streptococcus lactis).